Consider the following 720-residue polypeptide: DNA ligase (720 aa).

NAD(+) is bound by residues 60 to 64, 109 to 110, and Glu-140; these read DYDYD and SL. Lys-142 serves as the catalytic N6-AMP-lysine intermediate. 2 residues coordinate NAD(+): Arg-163 and Glu-201. Residues 220–239 are disordered; sequence GLPPFANPRNAAAGSIRQKD. 2 residues coordinate NAD(+): Lys-320 and Lys-344. Residues Cys-438, Cys-441, Cys-456, and Cys-461 each contribute to the Zn(2+) site. A BRCT domain is found at 619 to 709; it reads KVADVLKGKT…VDLEKIKKED (91 aa).

Belongs to the NAD-dependent DNA ligase family. LigA subfamily. Mn(2+) is required as a cofactor. Requires Mg(2+) as cofactor.

It catalyses the reaction NAD(+) + (deoxyribonucleotide)n-3'-hydroxyl + 5'-phospho-(deoxyribonucleotide)m = (deoxyribonucleotide)n+m + AMP + beta-nicotinamide D-nucleotide.. In terms of biological role, DNA ligase that catalyzes the formation of phosphodiester linkages between 5'-phosphoryl and 3'-hydroxyl groups in double-stranded DNA using NAD as a coenzyme and as the energy source for the reaction. It is essential for DNA replication and repair of damaged DNA. The sequence is that of DNA ligase from Aquifex aeolicus (strain VF5).